Consider the following 193-residue polypeptide: Large ribosomal subunit protein uL18 (193 aa).

This sequence belongs to the universal ribosomal protein uL18 family. In terms of assembly, part of the 50S ribosomal subunit. Contacts the 5S and 23S rRNAs.

This is one of the proteins that bind and probably mediate the attachment of the 5S RNA into the large ribosomal subunit, where it forms part of the central protuberance. The chain is Large ribosomal subunit protein uL18 from Methanococcus maripaludis (strain C5 / ATCC BAA-1333).